We begin with the raw amino-acid sequence, 277 residues long: Thiamine thiazole synthase (277 aa).

Residues S36, G63, V126, and H152 to D154 contribute to the NAD(+) site. Fe cation contacts are provided by D154 and H169. Position 230 (M230) interacts with NAD(+). R240 contacts glycine.

It belongs to the THI4 family. As to quaternary structure, homooctamer; tetramer of dimers. Requires Fe(2+) as cofactor.

The catalysed reaction is hydrogen sulfide + glycine + NAD(+) = ADP-5-ethyl-4-methylthiazole-2-carboxylate + nicotinamide + 3 H2O + H(+). Its pathway is cofactor biosynthesis; thiamine diphosphate biosynthesis. Involved in the biosynthesis of the thiazole moiety of thiamine. Catalyzes the conversion of NAD and glycine to adenosine diphosphate 5-(2-hydroxyethyl)-4-methylthiazole-2-carboxylate (ADT), an adenylated thiazole intermediate, using free sulfide as a source of sulfur. This is Thiamine thiazole synthase from Fervidobacterium nodosum (strain ATCC 35602 / DSM 5306 / Rt17-B1).